We begin with the raw amino-acid sequence, 243 residues long: Uridylate kinase (243 aa).

12–15 is an ATP binding site; sequence KLSG. Residues 20–25 are involved in allosteric activation by GTP; the sequence is GAKGFG. Positions 55 and 59 each coordinate ATP. Residues Asp-74 and 135 to 142 contribute to the UMP site; that span reads TGNPYFTT. Positions 163, 169, and 172 each coordinate ATP.

This sequence belongs to the UMP kinase family. In terms of assembly, homohexamer.

It localises to the cytoplasm. It carries out the reaction UMP + ATP = UDP + ADP. It participates in pyrimidine metabolism; CTP biosynthesis via de novo pathway; UDP from UMP (UMPK route): step 1/1. Allosterically activated by GTP. Inhibited by UTP. Catalyzes the reversible phosphorylation of UMP to UDP. This Symbiobacterium thermophilum (strain DSM 24528 / JCM 14929 / IAM 14863 / T) protein is Uridylate kinase.